The following is a 470-amino-acid chain: Putative ankyrin repeat protein L279 (470 aa).

4 ANK repeats span residues 119 to 148 (RDDYMLEWACAGNFTEVARYLLKIGANPGT), 149 to 178 (NKYACFESAVRNGNYDMVKLLLENIPGSDK), 372 to 401 (ETQGLLTNACQYNNSELVKYLLEKGANVNE), and 403 to 431 (NGKPLREAIKNNNKDIIKNLMDYSPDISL).

The sequence is that of Putative ankyrin repeat protein L279 from Acanthamoeba polyphaga (Amoeba).